Consider the following 823-residue polypeptide: DNA mismatch repair protein MutS (823 aa).

Residue 605–612 (GPNMSGKS) participates in ATP binding.

Belongs to the DNA mismatch repair MutS family.

This protein is involved in the repair of mismatches in DNA. It is possible that it carries out the mismatch recognition step. This protein has a weak ATPase activity. The protein is DNA mismatch repair protein MutS of Fervidobacterium nodosum (strain ATCC 35602 / DSM 5306 / Rt17-B1).